The primary structure comprises 243 residues: MAGHSKWANIKHKKEKMDAKKGRIFTKLTKDIIKAAKEGGGDPETNSKLKLAIERAKAFNLPSENIQRAIKRGTGELGGAKLEEVIYEGYGPAGTAIIVEALTDNKNRTAGEIRHIFDRNGGTLGAAGSVTWMFDKVGVIVVEKTDSINEEDLMMVAIEAGAEDFSADEGEFEIITDPSNFQEVREAIEKAGYKISEAEITMLPKNTIKLSPEDYEKFEKLIDKLEDNDDVQNVYHNVELEDE.

This sequence belongs to the TACO1 family.

It localises to the cytoplasm. The sequence is that of Probable transcriptional regulatory protein TTE1135 from Caldanaerobacter subterraneus subsp. tengcongensis (strain DSM 15242 / JCM 11007 / NBRC 100824 / MB4) (Thermoanaerobacter tengcongensis).